Consider the following 155-residue polypeptide: 6,7-dimethyl-8-ribityllumazine synthase (155 aa).

Residues F24, A58–E60, and A82–I84 contribute to the 5-amino-6-(D-ribitylamino)uracil site. S87–T88 is a binding site for (2S)-2-hydroxy-3-oxobutyl phosphate. Catalysis depends on H90, which acts as the Proton donor. F115 lines the 5-amino-6-(D-ribitylamino)uracil pocket. R129 contributes to the (2S)-2-hydroxy-3-oxobutyl phosphate binding site.

The protein belongs to the DMRL synthase family.

It carries out the reaction (2S)-2-hydroxy-3-oxobutyl phosphate + 5-amino-6-(D-ribitylamino)uracil = 6,7-dimethyl-8-(1-D-ribityl)lumazine + phosphate + 2 H2O + H(+). Its pathway is cofactor biosynthesis; riboflavin biosynthesis; riboflavin from 2-hydroxy-3-oxobutyl phosphate and 5-amino-6-(D-ribitylamino)uracil: step 1/2. In terms of biological role, catalyzes the formation of 6,7-dimethyl-8-ribityllumazine by condensation of 5-amino-6-(D-ribitylamino)uracil with 3,4-dihydroxy-2-butanone 4-phosphate. This is the penultimate step in the biosynthesis of riboflavin. The polypeptide is 6,7-dimethyl-8-ribityllumazine synthase (Acetivibrio thermocellus (strain ATCC 27405 / DSM 1237 / JCM 9322 / NBRC 103400 / NCIMB 10682 / NRRL B-4536 / VPI 7372) (Clostridium thermocellum)).